Here is a 449-residue protein sequence, read N- to C-terminus: MFS-type transporter hasB (449 aa).

A run of 12 helical transmembrane segments spans residues 44–64 (VAGS…CGIF), 80–100 (ALAW…PAVG), 112–132 (LPPF…CTKY), 135–155 (VMLA…LPAM), 168–188 (LAVG…PCML), 195–215 (VGFA…LFIA), 255–275 (LPWG…FAPL), 296–316 (AIAN…SDII), 322–342 (MCIV…PLEF), 346–366 (LAGI…FVSL), 387–407 (GGFC…EGAI), and 415–435 (FTGL…CTGT).

Belongs to the major facilitator superfamily. Monocarboxylate porter (TC 2.A.1.13) family.

It localises to the membrane. In terms of biological role, MFS-type transporter; part of the gene cluster that mediates the biosynthesis of hexadehydro-astechrome (HAS), a tryptophan-derived iron(III)-complex that acts as a virulence factor in infected mice. Required for the production of HAS. The polypeptide is MFS-type transporter hasB (Aspergillus fumigatus (strain CBS 144.89 / FGSC A1163 / CEA10) (Neosartorya fumigata)).